We begin with the raw amino-acid sequence, 368 residues long: DNA replication and repair protein RecF (368 aa).

30 to 37 (GNNAQGKT) is a binding site for ATP.

The protein belongs to the RecF family.

It is found in the cytoplasm. The RecF protein is involved in DNA metabolism; it is required for DNA replication and normal SOS inducibility. RecF binds preferentially to single-stranded, linear DNA. It also seems to bind ATP. The protein is DNA replication and repair protein RecF of Streptococcus pyogenes serotype M18 (strain MGAS8232).